The following is a 1369-amino-acid chain: Xanthine dehydrogenase (1369 aa).

Residues 20–106 (GEAVVYVNGV…GMHIITVEGI (87 aa)) form the 2Fe-2S ferredoxin-type domain. The [2Fe-2S] cluster site is built by Cys58, Cys63, Cys66, Cys88, Cys128, Cys131, Cys164, and Cys166. Residues 265–450 (NGFNGIRWYR…LSVILPWTRP (186 aa)) enclose the FAD-binding PCMH-type domain. Residues 293–300 (LIIGNSEV), Phe373, 383–387 (SVGGN), Asp396, Leu440, and Lys458 each bind FAD. 2 residues coordinate Mo-molybdopterin: Gln804 and Phe835. Glu839 and Arg917 together coordinate substrate. Arg949 is a Mo-molybdopterin binding site. 2 residues coordinate substrate: Phe951 and Thr1047. A Mo-molybdopterin-binding site is contributed by Ala1116. The Proton acceptor role is filled by Glu1305.

This sequence belongs to the xanthine dehydrogenase family. As to quaternary structure, homodimer. Requires [2Fe-2S] cluster as cofactor. FAD serves as cofactor. Mo-molybdopterin is required as a cofactor.

The catalysed reaction is xanthine + NAD(+) + H2O = urate + NADH + H(+). It carries out the reaction hypoxanthine + NAD(+) + H2O = xanthine + NADH + H(+). Key enzyme involved in purine catabolism. Catalyzes the oxidation of hypoxanthine to xanthine and the oxidation of xanthine to urate. This is Xanthine dehydrogenase (XDH) from Oryza sativa subsp. japonica (Rice).